We begin with the raw amino-acid sequence, 265 residues long: 3-methyl-2-oxobutanoate hydroxymethyltransferase (265 aa).

2 residues coordinate Mg(2+): Asp-43 and Asp-82. 3-methyl-2-oxobutanoate contacts are provided by residues Asp-43 to Ser-44, Asp-82, and Lys-111. Glu-113 contributes to the Mg(2+) binding site. The active-site Proton acceptor is the Glu-180.

The protein belongs to the PanB family. Homodecamer; pentamer of dimers. The cofactor is Mg(2+).

The protein localises to the cytoplasm. The enzyme catalyses 3-methyl-2-oxobutanoate + (6R)-5,10-methylene-5,6,7,8-tetrahydrofolate + H2O = 2-dehydropantoate + (6S)-5,6,7,8-tetrahydrofolate. It functions in the pathway cofactor biosynthesis; (R)-pantothenate biosynthesis; (R)-pantoate from 3-methyl-2-oxobutanoate: step 1/2. In terms of biological role, catalyzes the reversible reaction in which hydroxymethyl group from 5,10-methylenetetrahydrofolate is transferred onto alpha-ketoisovalerate to form ketopantoate. The chain is 3-methyl-2-oxobutanoate hydroxymethyltransferase from Francisella tularensis subsp. holarctica (strain OSU18).